Here is an 809-residue protein sequence, read N- to C-terminus: AP-3 complex subunit beta (809 aa).

HEAT repeat units follow at residues 37–76, 112–151, 153–186, 187–224, and 524–561; these read YYSQNINPQQLVTLLNSRNSREVRDAMKRIISIMASDDDS, DPNLTLLSINSLQKSLSDSNSELRCFALSALSDMKMSSLA, IILHTVKKLVTDPSAMVRGEVALAIIKLYRAGKN, DYHEELLDILKELMADTDPKVISCAVLAYKECYADHLE, and KICPDVLRRLIQNFSNEGPETRCQILVLSAKLLSYDID. 4 positions are modified to phosphoserine: serine 693, serine 698, serine 724, and serine 726. Disordered stretches follow at residues 708–739 and 763–809; these read FTSSSNAKLTGINDGDSNSISGKGNVNTFTSQ and PRKI…HLEL. Positions 722-739 are enriched in polar residues; sequence GDSNSISGKGNVNTFTSQ. Positions 772–791 are enriched in acidic residues; that stretch reads ESSDEDEDESEESSDDDEYS. The segment covering 792 to 809 has biased composition (low complexity); the sequence is DSSLGTSSSGTSSSHLEL.

This sequence belongs to the adaptor complexes large subunit family. Adaptor protein complex 3 (AP-3) is a heterotetramer composed of 2 large adaptins (APL5 and APL6), a medium adaptin (APM3) and a small adaptin (APS3). Post-translationally, pyrophosphorylated by 5-diphosphoinositol pentakisphosphate (5-IP7). Serine pyrophosphorylation is achieved by Mg(2+)-dependent, but enzyme independent transfer of a beta-phosphate from a inositol pyrophosphate to a pre-phosphorylated serine residue.

It localises to the golgi apparatus. Its subcellular location is the cytoplasmic vesicle. The protein localises to the clathrin-coated vesicle membrane. Functionally, part of the AP-3 complex, an adaptor-related complex which is not clathrin-associated. The complex is associated with the Golgi region as well as more peripheral structures. It facilitates the budding of vesicles from the Golgi membrane and may be directly involved in trafficking to the vacuole. Required for the transport via the ALP pathway, which directs the transport of the cargo proteins PHO8 and VAM3 to the vacuole. The sequence is that of AP-3 complex subunit beta (APL6) from Saccharomyces cerevisiae (strain ATCC 204508 / S288c) (Baker's yeast).